A 103-amino-acid polypeptide reads, in one-letter code: Large ribosomal subunit protein uL24 (103 aa).

This sequence belongs to the universal ribosomal protein uL24 family. Part of the 50S ribosomal subunit.

One of two assembly initiator proteins, it binds directly to the 5'-end of the 23S rRNA, where it nucleates assembly of the 50S subunit. Functionally, one of the proteins that surrounds the polypeptide exit tunnel on the outside of the subunit. The sequence is that of Large ribosomal subunit protein uL24 from Treponema pallidum (strain Nichols).